Consider the following 366-residue polypeptide: Chorismate synthase (366 aa).

R48 contributes to the NADP(+) binding site. FMN contacts are provided by residues 125-127 (RSS), G283, 298-302 (KPTPS), and R324.

The protein belongs to the chorismate synthase family. Homotetramer. FMNH2 serves as cofactor.

It carries out the reaction 5-O-(1-carboxyvinyl)-3-phosphoshikimate = chorismate + phosphate. It participates in metabolic intermediate biosynthesis; chorismate biosynthesis; chorismate from D-erythrose 4-phosphate and phosphoenolpyruvate: step 7/7. Functionally, catalyzes the anti-1,4-elimination of the C-3 phosphate and the C-6 proR hydrogen from 5-enolpyruvylshikimate-3-phosphate (EPSP) to yield chorismate, which is the branch point compound that serves as the starting substrate for the three terminal pathways of aromatic amino acid biosynthesis. This reaction introduces a second double bond into the aromatic ring system. In Lachnospira eligens (strain ATCC 27750 / DSM 3376 / VPI C15-48 / C15-B4) (Eubacterium eligens), this protein is Chorismate synthase.